The following is a 124-amino-acid chain: Small ribosomal subunit protein uS12 (124 aa).

D90 bears the 3-methylthioaspartic acid mark.

The protein belongs to the universal ribosomal protein uS12 family. Part of the 30S ribosomal subunit. Contacts proteins S8 and S17. May interact with IF1 in the 30S initiation complex.

With S4 and S5 plays an important role in translational accuracy. In terms of biological role, interacts with and stabilizes bases of the 16S rRNA that are involved in tRNA selection in the A site and with the mRNA backbone. Located at the interface of the 30S and 50S subunits, it traverses the body of the 30S subunit contacting proteins on the other side and probably holding the rRNA structure together. The combined cluster of proteins S8, S12 and S17 appears to hold together the shoulder and platform of the 30S subunit. The sequence is that of Small ribosomal subunit protein uS12 from Wolbachia pipientis wMel.